Here is a 224-residue protein sequence, read N- to C-terminus: Non-structural protein V (224 aa).

Polar residues predominate over residues 54–65 (QKNIQHPTASHQ). 2 disordered regions span residues 54–94 (QKNI…TQIP) and 150–172 (TEFK…GHRR). 8 residues coordinate Zn(2+): His-170, Cys-189, Cys-193, Cys-205, Cys-207, Cys-210, Cys-214, and Cys-217.

The protein belongs to the paramyxoviruses V protein family. As to quaternary structure, interacts with host IFIH1/MDA5 and DHX58/LGP2. Forms with host DDB1, CUL4A, STAT1, STAT2 and STAT3 the mumps virus V-dependent complex (VDC).

The protein resides in the virion. The protein localises to the host cytoplasm. In terms of biological role, plays an essential role in the inhibition of host immune response. Prevents the establishment of cellular antiviral state by blocking interferon-alpha/beta (IFN-alpha/beta) production and signaling pathway. Interacts with host IFIH1/MDA5 and DHX58/LGP2 to inhibit the transduction pathway involved in the activation of IFN-beta promoter, thus protecting the virus against cell antiviral state. Blocks the type I and II interferon signaling pathways by interacting with host STAT1, STAT2 and STAT3, and mediating their ubiquitination and subsequent proteasomal degradation. The chain is Non-structural protein V from Homo sapiens (Human).